The sequence spans 222 residues: Superoxide dismutase [Mn], mitochondrial (222 aa).

A mitochondrion-targeting transit peptide spans 1–24 (MLSRAACSTSRRLVPALSVLGSRQ). His50 provides a ligand contact to Mn(2+). Tyr58 is subject to 3'-nitrotyrosine. N6-acetyllysine; alternate is present on residues Lys68 and Lys75. An N6-succinyllysine; alternate mark is found at Lys68 and Lys75. His98 serves as a coordination point for Mn(2+). N6-acetyllysine; alternate is present on residues Lys122 and Lys130. N6-succinyllysine; alternate occurs at positions 122 and 130. The Mn(2+) site is built by Asp183 and His187. The residue at position 202 (Lys202) is an N6-acetyllysine.

This sequence belongs to the iron/manganese superoxide dismutase family. In terms of assembly, homotetramer. Requires Mn(2+) as cofactor. Post-translationally, nitrated under oxidative stress. Nitration coupled with oxidation inhibits the catalytic activity. In terms of processing, acetylation at Lys-122 decreases enzymatic activity. Deacetylated by SIRT3 upon exposure to ionizing radiations or after long fasting. Polyubiquitinated; leading to proteasomal degradation. Deubiquitinated by USP36 which increases protein stability.

The protein localises to the mitochondrion matrix. It catalyses the reaction 2 superoxide + 2 H(+) = H2O2 + O2. Functionally, destroys superoxide anion radicals which are normally produced within the cells and which are toxic to biological systems. The sequence is that of Superoxide dismutase [Mn], mitochondrial (SOD2) from Bos taurus (Bovine).